Consider the following 697-residue polypeptide: Phosphate acetyltransferase (697 aa).

Residues 374 to 697 (LFLYNLVQAA…TVVITALQVK (324 aa)) form a phosphate acetyltransferase region.

The protein in the N-terminal section; belongs to the CobB/CobQ family. In the C-terminal section; belongs to the phosphate acetyltransferase and butyryltransferase family.

The protein resides in the cytoplasm. The catalysed reaction is acetyl-CoA + phosphate = acetyl phosphate + CoA. It participates in metabolic intermediate biosynthesis; acetyl-CoA biosynthesis; acetyl-CoA from acetate: step 2/2. Involved in acetate metabolism. The sequence is that of Phosphate acetyltransferase (pta) from Synechocystis sp. (strain ATCC 27184 / PCC 6803 / Kazusa).